A 307-amino-acid chain; its full sequence is Synaptophysin (307 aa).

The Cytoplasmic segment spans residues 1–19 (MDVVNQLVAGGQFRVVKEP). Residues 15-222 (VVKEPLGFVK…NLWFVFKETG (208 aa)) form the MARVEL domain. Residues 20–43 (LGFVKVLQWVFAIFAFATCGSYTG) form a helical membrane-spanning segment. Residues 44 to 101 (ELRLSVECANKTESALNIEVEFEYPFRLHQVYFDAPSCVKGGTTKIFLVGDYSSSAEF) are Vesicular-facing. An N-linked (GlcNAc...) asparagine glycan is attached at asparagine 53. The residue at position 75 (tyrosine 75) is a Phosphotyrosine. The helical transmembrane segment at 102–125 (FVTVAVFAFLYSMGALATYIFLQN) threads the bilayer. The Cytoplasmic portion of the chain corresponds to 126–132 (KYRENNK). The chain crosses the membrane as a helical span at residues 133-156 (GPMMDFLATAVFAFMWLVSSSAWA). Residues 157-194 (KGLSDVKMATDPENIIKEMPMCRQTGNTCKELRDPVTS) are Vesicular-facing. Residues 195-218 (GLNTSVVFGFLNLVLWVGNLWFVF) traverse the membrane as a helical segment. Over 219–307 (KETGWAAPFM…GAPTSFSNQM (89 aa)) the chain is Cytoplasmic. Threonine 221 carries the post-translational modification Phosphothreonine. Residues 233 to 307 (GAPEKQPAPG…GAPTSFSNQM (75 aa)) are disordered. Positions 248–258 (AGYGQGPGGYG) are enriched in gly residues. The tract at residues 249–298 (GYGQGPGGYGPQDSYGPQGGYQPDYGQPASGGGGYGPQGDYGQQGYGQQG) is repeats, Gly-rich. The segment covering 259 to 276 (PQDSYGPQGGYQPDYGQP) has biased composition (low complexity). A phosphotyrosine mark is found at tyrosine 273 and tyrosine 289. The span at 277-296 (ASGGGGYGPQGDYGQQGYGQ) shows a compositional bias: gly residues.

The protein belongs to the synaptophysin/synaptobrevin family. Homohexamer or homotetramer. Interacts with SRCIN1. Interacts with VAMP2; the interaction is inhibited by interaction of VAPM2 with SEPT8. In terms of processing, ubiquitinated; mediated by SIAH1 or SIAH2 and leading to its subsequent proteasomal degradation. Phosphorylated by SRC. Expressed in the brain with expression in the cerebrum and the cerebellum.

The protein localises to the cytoplasmic vesicle. The protein resides in the secretory vesicle. It is found in the synaptic vesicle membrane. Its subcellular location is the synapse. It localises to the synaptosome. In terms of biological role, possibly involved in structural functions as organizing other membrane components or in targeting the vesicles to the plasma membrane. Involved in the regulation of short-term and long-term synaptic plasticity. This chain is Synaptophysin (Syp), found in Rattus norvegicus (Rat).